Reading from the N-terminus, the 403-residue chain is Histidine--tRNA ligase (403 aa).

This sequence belongs to the class-II aminoacyl-tRNA synthetase family. Homodimer.

It localises to the cytoplasm. It catalyses the reaction tRNA(His) + L-histidine + ATP = L-histidyl-tRNA(His) + AMP + diphosphate + H(+). The sequence is that of Histidine--tRNA ligase (hisS) from Aquifex aeolicus (strain VF5).